The following is an 81-amino-acid chain: Small ribosomal subunit protein bS16 (81 aa).

Belongs to the bacterial ribosomal protein bS16 family.

The sequence is that of Small ribosomal subunit protein bS16 from Lachnoclostridium phytofermentans (strain ATCC 700394 / DSM 18823 / ISDg) (Clostridium phytofermentans).